The sequence spans 280 residues: Golgi to ER traffic protein 2 (280 aa).

Composition is skewed to basic and acidic residues over residues 1–17, 44–62, and 71–80; these read MSLS…ERRQ, SALD…EAVK, and AKKESTAQAK. Positions 1–80 are disordered; the sequence is MSLSEAEKRK…AKKESTAQAK (80 aa). The Cytoplasmic segment spans residues 1-146; that stretch reads MSLSEAEKRK…VEYHKYRVNT (146 aa). The chain crosses the membrane as a helical span at residues 147-166; that stretch reads LTAKTTLVKWIVLLAYIFLL. The Lumenal segment spans residues 167 to 191; that stretch reads TRTDDTYFPFVVRSYLPEVFTSQSS. Residues 192-211 form a helical membrane-spanning segment; the sequence is FFSIFLTFEILATSIYYQLS. Over 212 to 258 the chain is Cytoplasmic; it reads VGVERETGVKTLQDTSKIVSLVSMVPEGILPIADLRGKVILAMKYWN. Residues 259–279 traverse the membrane as a helical segment; it reads IIAMMIGDVCFVLVAIGLVSQ. Ile-280 is a topological domain (lumenal).

Belongs to the GET2 family. As to quaternary structure, component of the Golgi to ER traffic (GET) complex, which is composed of GET1, GET2 and GET3. Within the complex, GET1 and GET2 form a heterotetramer which is stabilized by phosphatidylinositol binding and which binds to the GET3 homodimer.

The protein localises to the endoplasmic reticulum membrane. The protein resides in the golgi apparatus membrane. In terms of biological role, required for the post-translational delivery of tail-anchored (TA) proteins to the endoplasmic reticulum. Together with GET1, acts as a membrane receptor for soluble GET3, which recognizes and selectively binds the transmembrane domain of TA proteins in the cytosol. The GET complex cooperates with the HDEL receptor ERD2 to mediate the ATP-dependent retrieval of resident ER proteins that contain a C-terminal H-D-E-L retention signal from the Golgi to the ER. The polypeptide is Golgi to ER traffic protein 2 (Candida glabrata (strain ATCC 2001 / BCRC 20586 / JCM 3761 / NBRC 0622 / NRRL Y-65 / CBS 138) (Yeast)).